The following is an 85-amino-acid chain: Transcription factor 4 (85 aa).

A bHLH domain is found at 7 to 60 (ERRMANNARERLRVRDINEAFKELGRMVQLHLKSDKPQTKLLILHQAVAVILSL). Residues 62-85 (QQVRERNLNPKAACLKRREEEKVS) form a class A specific domain region.

As to quaternary structure, efficient DNA binding requires dimerization with another bHLH protein. Forms homo- or heterooligomers with myogenin.

It is found in the nucleus. Its function is as follows. Transcription factor that binds to the immunoglobulin enhancer Mu-E5/KE5-motif. Involved in the initiation of neuronal differentiation. Binds to the E-box present in the somatostatin receptor 2 initiator element (SSTR2-INR) to activate transcription. This chain is Transcription factor 4 (TCF4), found in Gallus gallus (Chicken).